Consider the following 478-residue polypeptide: Protein nucleotidyltransferase YdiU (478 aa).

The ATP site is built by G84, G86, R87, K107, D119, G120, R170, and R177. D246 acts as the Proton acceptor in catalysis. Mg(2+) contacts are provided by N247 and D256. D256 provides a ligand contact to ATP.

This sequence belongs to the SELO family. The cofactor is Mg(2+). Mn(2+) serves as cofactor.

It catalyses the reaction L-seryl-[protein] + ATP = 3-O-(5'-adenylyl)-L-seryl-[protein] + diphosphate. The catalysed reaction is L-threonyl-[protein] + ATP = 3-O-(5'-adenylyl)-L-threonyl-[protein] + diphosphate. The enzyme catalyses L-tyrosyl-[protein] + ATP = O-(5'-adenylyl)-L-tyrosyl-[protein] + diphosphate. It carries out the reaction L-histidyl-[protein] + UTP = N(tele)-(5'-uridylyl)-L-histidyl-[protein] + diphosphate. It catalyses the reaction L-seryl-[protein] + UTP = O-(5'-uridylyl)-L-seryl-[protein] + diphosphate. The catalysed reaction is L-tyrosyl-[protein] + UTP = O-(5'-uridylyl)-L-tyrosyl-[protein] + diphosphate. Its function is as follows. Nucleotidyltransferase involved in the post-translational modification of proteins. It can catalyze the addition of adenosine monophosphate (AMP) or uridine monophosphate (UMP) to a protein, resulting in modifications known as AMPylation and UMPylation. This is Protein nucleotidyltransferase YdiU from Escherichia coli O1:K1 / APEC.